A 125-amino-acid chain; its full sequence is Succinate dehydrogenase hydrophobic membrane anchor subunit (125 aa).

Topologically, residues 1-24 (MTYDFRAEIVKAKNTGSAKSGSHH) are cytoplasmic. Residues 25-45 (WLLQRITAIILVLCSLWLLYF) traverse the membrane as a helical segment. At 46 to 67 (TLANKNSDVNIIIWELKRPINL) the chain is on the periplasmic side. A helical transmembrane segment spans residues 68–89 (IPLLIAVITSLYHAMLGMQVVI). H80 provides a ligand contact to heme. Residues 90 to 99 (EDYISCNKLR) lie on the Cytoplasmic side of the membrane. Y92 contacts a ubiquinone. A helical membrane pass occupies residues 100-123 (NTLIIAVKLFSILTIVAFIVAVFY).

As to quaternary structure, part of an enzyme complex containing four subunits: a flavoprotein, an iron-sulfur protein, plus two membrane-anchoring proteins, SdhC and SdhD. Requires heme as cofactor.

Its subcellular location is the cell inner membrane. Its pathway is carbohydrate metabolism; tricarboxylic acid cycle. In terms of biological role, membrane-anchoring subunit of succinate dehydrogenase (SDH). The chain is Succinate dehydrogenase hydrophobic membrane anchor subunit (sdhD) from Rickettsia bellii (strain RML369-C).